Consider the following 82-residue polypeptide: Translational regulator CsrA (82 aa).

This sequence belongs to the CsrA/RsmA family. In terms of assembly, homodimer; the beta-strands of each monomer intercalate to form a hydrophobic core while the alpha-helices form wings that extend away from the core. Each of the alpha-helical wings interacts with an FliW monomer, yielding a FliW-CsrA(2)-FliW complex.

The protein resides in the cytoplasm. Its function is as follows. A translational regulator that binds mRNA to regulate translation initiation and/or mRNA stability. Usually binds in the 5'-UTR at or near the Shine-Dalgarno sequence preventing ribosome-binding, thus repressing translation. Its main target seems to be the major flagellin gene, while its function is anatagonized by FliW. This Geobacillus thermodenitrificans (strain NG80-2) protein is Translational regulator CsrA.